A 539-amino-acid chain; its full sequence is Sorting nexin-27 (539 aa).

Residues 1-40 (MADEDGEGIHPSTPHRNGGGGGGSGLHCAGNGGGGGGGPR) are disordered. The span at 17–39 (NGGGGGGSGLHCAGNGGGGGGGP) shows a compositional bias: gly residues. A PDZ domain is found at 41 to 134 (VVRIVKSESG…ELILTVLSVP (94 aa)). Phosphoserine occurs at positions 49 and 60. One can recognise a PX domain in the interval 159-267 (QAVPISVPTY…EFLSESDENY (109 aa)). A Ras-associating domain is found at 271–360 (SDVELRVALP…TCLTIRKWLF (90 aa)). The tract at residues 271-360 (SDVELRVALP…TCLTIRKWLF (90 aa)) is FERM-like region F1. The tract at residues 371–419 (NDLAVTYFFHQAVDDVKKGYIKAEEKSYQLQKLYEQRKMVMYLNMLRTC) is FERM-like region F2. The segment at 423–523 (NEIIFPHCAC…RVFCELKWRK (101 aa)) is FERM-like region F3.

In terms of assembly, core component of the SNX27-retromer, a multiprotein complex composed of SNX27, the WASH complex and the retromer complex. Interacts (via PDZ domain) with a number of target transmembrane proteins (via PDZ-binding motif): ABCC4, ADRB2, ARHGEF7, GRIA1, GRIA2, GRIN1, GRIN2A GRIN2C, KCNJ6, KCNJ9 and SLC2A1/GLUT1. Interacts (via the FERM-like regions) with the WASH complex. Interacts with SNX1. Interacts with CYTIP. Interacts with DGKZ. Interacts with MCC. Interacts (via PDZ domains) with SLC9A3; directs SLC9A3 membrane insertion from early endosomes to the plasma membrane. In terms of tissue distribution, isoform 1 is predominantly expressed in the testis, whereas isoform 2 is predominant in various brain regions, including, neocortex, paleocortex, striatum, hippocampus, cerebellum and brain stem. Expressed in cells of hematopoietic origin.

The protein resides in the early endosome membrane. The protein localises to the cytoplasm. It is found in the cytosol. Involved in the retrograde transport from endosome to plasma membrane, a trafficking pathway that promotes the recycling of internalized transmembrane proteins. Following internalization, endocytosed transmembrane proteins are delivered to early endosomes and recycled to the plasma membrane instead of being degraded in lysosomes. SNX27 specifically binds and directs sorting of a subset of transmembrane proteins containing a PDZ-binding motif at the C-terminus: following interaction with target transmembrane proteins, associates with the retromer complex, preventing entry into the lysosomal pathway, and promotes retromer-tubule based plasma membrane recycling. SNX27 also binds with the WASH complex. Interacts with membranes containing phosphatidylinositol-3-phosphate (PtdIns(3P)). May participate in establishment of natural killer cell polarity. Recruits CYTIP to early endosomes. The polypeptide is Sorting nexin-27 (Snx27) (Rattus norvegicus (Rat)).